The sequence spans 70 residues: Cytochrome c oxidase subunit 8B, mitochondrial (70 aa).

The N-terminal 24 residues, 1 to 24 (MPRLPPALRLLQPPLRCWVVPKLH), are a transit peptide targeting the mitochondrion. The Mitochondrial matrix portion of the chain corresponds to 25–35 (VSAKPARTPTS). A helical membrane pass occupies residues 36-59 (PAEQAVGLSMMFLSFLVPAGWVLS). At 60-70 (HLESYKKSSTA) the chain is on the mitochondrial intermembrane side.

The protein belongs to the cytochrome c oxidase VIII family. As to quaternary structure, component of the cytochrome c oxidase (complex IV, CIV), a multisubunit enzyme composed of 14 subunits. The complex is composed of a catalytic core of 3 subunits MT-CO1, MT-CO2 and MT-CO3, encoded in the mitochondrial DNA, and 11 supernumerary subunits COX4I, COX5A, COX5B, COX6A, COX6B, COX6C, COX7A, COX7B, COX7C, COX8 and NDUFA4, which are encoded in the nuclear genome. The complex exists as a monomer or a dimer and forms supercomplexes (SCs) in the inner mitochondrial membrane with NADH-ubiquinone oxidoreductase (complex I, CI) and ubiquinol-cytochrome c oxidoreductase (cytochrome b-c1 complex, complex III, CIII), resulting in different assemblies (supercomplex SCI(1)III(2)IV(1) and megacomplex MCI(2)III(2)IV(2)).

It localises to the mitochondrion inner membrane. It functions in the pathway energy metabolism; oxidative phosphorylation. Component of the cytochrome c oxidase, the last enzyme in the mitochondrial electron transport chain which drives oxidative phosphorylation. The respiratory chain contains 3 multisubunit complexes succinate dehydrogenase (complex II, CII), ubiquinol-cytochrome c oxidoreductase (cytochrome b-c1 complex, complex III, CIII) and cytochrome c oxidase (complex IV, CIV), that cooperate to transfer electrons derived from NADH and succinate to molecular oxygen, creating an electrochemical gradient over the inner membrane that drives transmembrane transport and the ATP synthase. Cytochrome c oxidase is the component of the respiratory chain that catalyzes the reduction of oxygen to water. Electrons originating from reduced cytochrome c in the intermembrane space (IMS) are transferred via the dinuclear copper A center (CU(A)) of subunit 2 and heme A of subunit 1 to the active site in subunit 1, a binuclear center (BNC) formed by heme A3 and copper B (CU(B)). The BNC reduces molecular oxygen to 2 water molecules using 4 electrons from cytochrome c in the IMS and 4 protons from the mitochondrial matrix. The polypeptide is Cytochrome c oxidase subunit 8B, mitochondrial (COX8B) (Eulemur fulvus fulvus (Brown lemur)).